A 248-amino-acid chain; its full sequence is Coproheme decarboxylase (248 aa).

Fe-coproporphyrin III contacts are provided by residues Arg130, 144-148, His171, Gln184, and Ser222; that span reads YPMDK. Tyr144 is an active-site residue.

It belongs to the ChdC family. Type 1 subfamily. In terms of assembly, homopentamer. Requires Fe-coproporphyrin III as cofactor.

It carries out the reaction Fe-coproporphyrin III + 2 H2O2 + 2 H(+) = heme b + 2 CO2 + 4 H2O. The catalysed reaction is Fe-coproporphyrin III + H2O2 + H(+) = harderoheme III + CO2 + 2 H2O. It catalyses the reaction harderoheme III + H2O2 + H(+) = heme b + CO2 + 2 H2O. Its pathway is porphyrin-containing compound metabolism; protoheme biosynthesis. Its function is as follows. Involved in coproporphyrin-dependent heme b biosynthesis. Catalyzes the decarboxylation of Fe-coproporphyrin III (coproheme) to heme b (protoheme IX), the last step of the pathway. The reaction occurs in a stepwise manner with a three-propionate intermediate. The sequence is that of Coproheme decarboxylase from Geobacillus kaustophilus (strain HTA426).